The primary structure comprises 261 residues: Carnitinyl-CoA dehydratase (261 aa).

Residue Glu-111 is the Nucleophile of the active site. Glu-131 functions as the Proton acceptor in the catalytic mechanism.

Belongs to the enoyl-CoA hydratase/isomerase family.

The enzyme catalyses (R)-carnitinyl-CoA = crotonobetainyl-CoA + H2O. It participates in amine and polyamine metabolism; carnitine metabolism. Catalyzes the reversible dehydration of L-carnitinyl-CoA to crotonobetainyl-CoA. The protein is Carnitinyl-CoA dehydratase of Salmonella typhi.